A 231-amino-acid polypeptide reads, in one-letter code: UPF0702 transmembrane protein YetF (231 aa).

A run of 3 helical transmembrane segments spans residues 5 to 25 (LSVA…LKLL), 33 to 53 (ITPF…NAVY), and 59 to 79 (IKEI…IEFI).

This sequence belongs to the UPF0702 family.

It is found in the cell membrane. This is UPF0702 transmembrane protein YetF (yetF) from Bacillus subtilis (strain 168).